Consider the following 87-residue polypeptide: Acyl-CoA-binding protein (87 aa).

The ACB domain maps to 2–87 (VSQLFEEKAK…VDQLIAKYSS (86 aa)). An acyl-CoA-binding positions include 29 to 33 (YALYK), Lys51, and Lys55. Lys51 is covalently cross-linked (Glycyl lysine isopeptide (Lys-Gly) (interchain with G-Cter in ubiquitin)). Lys72 participates in a covalent cross-link: Glycyl lysine isopeptide (Lys-Gly) (interchain with G-Cter in ubiquitin). Tyr74 lines the an acyl-CoA pocket.

Belongs to the ACBP family.

In terms of biological role, binds medium- and long-chain acyl-CoA esters with very high affinity and may function as an intracellular carrier of acyl-CoA esters. Enhances the in vitro activity of the ceramide synthase complex. The protein is Acyl-CoA-binding protein (ACB1) of Saccharomyces cerevisiae (strain ATCC 204508 / S288c) (Baker's yeast).